Consider the following 454-residue polypeptide: Peroxisome assembly protein 10 (454 aa).

The Peroxisomal matrix segment spans residues 1–23 (MATQPPPARPPPPLTSSPYPYAA). The helical transmembrane segment at 24-53 (APDIIRAHQKDAYFQGVLANRLSDLHRRLR) threads the bilayer. Position 54 (glycine 54) is a topological domain, cytoplasmic. Residues 55-76 (ARSAHAWAAETRTFAAALYLCL) form a helical membrane-spanning segment. Residues 77–132 (TTLLGNRTLGEEYCDLVQVEEAPSKLFASSSSKAADDHIYENGLGGGGDGGPLLPS) are Peroxisomal matrix-facing. A helical membrane pass occupies residues 133–165 (LPRRAGYILTAIVLPHLASRALPSVRSAIRKRL). Topologically, residues 166–201 (QSRLATLSRRRQQTGTKSGSGRGGRGGGGGITEYRV) are cytoplasmic. The interval 171–194 (TLSRRRQQTGTKSGSGRGGRGGGG) is disordered. The segment covering 183–194 (SGSGRGGRGGGG) has biased composition (gly residues). A helical membrane pass occupies residues 202-229 (LRYLLTHLTPLTSGAHFRAATLAVFYFT). Residues 230–276 (GAYYELSKWVWGLRYVFTTRAGRVVDDDHNRHHHSPQHGGGNGGRAG) are Peroxisomal matrix-facing. Residues 277-296 (YEVLGVLLVVQMAVRAWLHV) traverse the membrane as a helical segment. At 297–454 (REQLSSGSVA…VQHILPLRAA (158 aa)) the chain is on the cytoplasmic side. Positions 302–329 (SGSVAGGGGEEEEDGEDGFRERTAFGPG) are disordered. Residues cysteine 402, cysteine 405, cysteine 417, histidine 419, cysteine 422, cysteine 425, cysteine 436, and cysteine 439 each coordinate Zn(2+). The RING-type zinc-finger motif lies at 402–440 (CTLCLEELKDPAATQCGHVFCWACIGDWVREKPECPLCR).

It belongs to the pex2/pex10/pex12 family. Component of the PEX2-PEX10-PEX12 retrotranslocation channel, composed of PEX2, PEX10 and PEX12.

It is found in the peroxisome membrane. The catalysed reaction is S-ubiquitinyl-[E2 ubiquitin-conjugating enzyme]-L-cysteine + [acceptor protein]-L-lysine = [E2 ubiquitin-conjugating enzyme]-L-cysteine + N(6)-ubiquitinyl-[acceptor protein]-L-lysine.. It functions in the pathway protein modification; protein ubiquitination. With respect to regulation, the E3 ubiquitin-protein ligase activity is stimulated by PEX12. In terms of biological role, E3 ubiquitin-protein ligase component of a retrotranslocation channel required for peroxisome organization by mediating export of the PEX5 receptor from peroxisomes to the cytosol, thereby promoting PEX5 recycling. The retrotranslocation channel is composed of PEX2, PEX10 and PEX12; each subunit contributing transmembrane segments that coassemble into an open channel that specifically allows the passage of PEX5 through the peroxisomal membrane. PEX10 also regulates PEX5 recycling by acting as a E3 ubiquitin-protein ligase. When PEX5 recycling is compromised, PEX10 catalyzes polyubiquitination of PEX5 during its passage through the retrotranslocation channel, leading to its degradation. The sequence is that of Peroxisome assembly protein 10 from Thermothelomyces thermophilus (strain ATCC 42464 / BCRC 31852 / DSM 1799) (Sporotrichum thermophile).